Here is a 215-residue protein sequence, read N- to C-terminus: Ribosomal RNA small subunit methyltransferase G (215 aa).

Residues Gly73, Leu78, 125–126 (AE), and Arg140 each bind S-adenosyl-L-methionine.

This sequence belongs to the methyltransferase superfamily. RNA methyltransferase RsmG family.

The protein resides in the cytoplasm. Specifically methylates the N7 position of guanine in position 518 of 16S rRNA. This Renibacterium salmoninarum (strain ATCC 33209 / DSM 20767 / JCM 11484 / NBRC 15589 / NCIMB 2235) protein is Ribosomal RNA small subunit methyltransferase G.